The primary structure comprises 441 residues: Serine/threonine-protein kinase prk-2 (441 aa).

Positions 31-285 (YKLKAELGRG…LEAILNHPWV (255 aa)) constitute a Protein kinase domain. ATP contacts are provided by residues 37–45 (LGRGGFGVV) and Lys-60. Asp-158 serves as the catalytic Proton acceptor. Residues 301–364 (QKKTSESSDD…NQKKPNHKEF (64 aa)) form a disordered region. Over residues 303-320 (KTSESSDDHHSETLGDHS) the composition is skewed to basic and acidic residues. A compositionally biased stretch (polar residues) spans 328 to 338 (PPTSSVSQQPG).

This sequence belongs to the protein kinase superfamily. Ser/Thr protein kinase family. PIM subfamily. The cofactor is Mg(2+).

The enzyme catalyses L-seryl-[protein] + ATP = O-phospho-L-seryl-[protein] + ADP + H(+). It catalyses the reaction L-threonyl-[protein] + ATP = O-phospho-L-threonyl-[protein] + ADP + H(+). Its function is as follows. Involved in the negative regulation of synaptic differentiation in PLM neurons. The polypeptide is Serine/threonine-protein kinase prk-2 (Caenorhabditis elegans).